Reading from the N-terminus, the 577-residue chain is Proline--tRNA ligase (577 aa).

It belongs to the class-II aminoacyl-tRNA synthetase family. ProS type 1 subfamily. In terms of assembly, homodimer.

It is found in the cytoplasm. The catalysed reaction is tRNA(Pro) + L-proline + ATP = L-prolyl-tRNA(Pro) + AMP + diphosphate. Functionally, catalyzes the attachment of proline to tRNA(Pro) in a two-step reaction: proline is first activated by ATP to form Pro-AMP and then transferred to the acceptor end of tRNA(Pro). As ProRS can inadvertently accommodate and process non-cognate amino acids such as alanine and cysteine, to avoid such errors it has two additional distinct editing activities against alanine. One activity is designated as 'pretransfer' editing and involves the tRNA(Pro)-independent hydrolysis of activated Ala-AMP. The other activity is designated 'posttransfer' editing and involves deacylation of mischarged Ala-tRNA(Pro). The misacylated Cys-tRNA(Pro) is not edited by ProRS. This Thermotoga neapolitana (strain ATCC 49049 / DSM 4359 / NBRC 107923 / NS-E) protein is Proline--tRNA ligase.